Reading from the N-terminus, the 320-residue chain is Acyl-coenzyme A thioesterase 8 (320 aa).

Catalysis depends on charge relay system residues D233, S255, and Q305. A Microbody targeting signal motif is present at residues 318–320 (SKL).

Belongs to the C/M/P thioester hydrolase family. In terms of assembly, homodimer. As to expression, ubiquitous.

The protein localises to the peroxisome matrix. The catalysed reaction is choloyl-CoA + H2O = cholate + CoA + H(+). It catalyses the reaction chenodeoxycholoyl-CoA + H2O = chenodeoxycholate + CoA + H(+). It carries out the reaction acetyl-CoA + H2O = acetate + CoA + H(+). The enzyme catalyses malonyl-CoA + H2O = malonate + CoA + H(+). The catalysed reaction is acetoacetyl-CoA + H2O = acetoacetate + CoA + H(+). It catalyses the reaction propanoyl-CoA + H2O = propanoate + CoA + H(+). It carries out the reaction butanoyl-CoA + H2O = butanoate + CoA + H(+). The enzyme catalyses succinyl-CoA + H2O = succinate + CoA + H(+). The catalysed reaction is glutaryl-CoA + H2O = glutarate + CoA + H(+). It catalyses the reaction hexanoyl-CoA + H2O = hexanoate + CoA + H(+). It carries out the reaction hexanedioyl-CoA + H2O = hexanedioate + CoA + H(+). The enzyme catalyses octanoyl-CoA + H2O = octanoate + CoA + H(+). The catalysed reaction is octanedioyl-CoA + H2O = octanedioate + CoA + H(+). It catalyses the reaction decanoyl-CoA + H2O = decanoate + CoA + H(+). It carries out the reaction decanedioyl-CoA + H2O = decanedioate + CoA + H(+). The enzyme catalyses dodecanoyl-CoA + H2O = dodecanoate + CoA + H(+). The catalysed reaction is dodecanedioyl-CoA + H2O = dodecanedioate + CoA + H(+). It catalyses the reaction tetradecanoyl-CoA + H2O = tetradecanoate + CoA + H(+). It carries out the reaction (9Z)-tetradecenoyl-CoA + H2O = (9Z)-tetradecenoate + CoA + H(+). The enzyme catalyses hexadecanoyl-CoA + H2O = hexadecanoate + CoA + H(+). The catalysed reaction is (9Z)-hexadecenoyl-CoA + H2O = (9Z)-hexadecenoate + CoA + H(+). It catalyses the reaction octadecanoyl-CoA + H2O = octadecanoate + CoA + H(+). It carries out the reaction (9Z)-octadecenoyl-CoA + H2O = (9Z)-octadecenoate + CoA + H(+). The enzyme catalyses (9Z,12Z)-octadecadienoyl-CoA + H2O = (9Z,12Z)-octadecadienoate + CoA + H(+). The catalysed reaction is eicosanoyl-CoA + H2O = eicosanoate + CoA + H(+). It catalyses the reaction (5Z,8Z,11Z,14Z)-eicosatetraenoyl-CoA + H2O = (5Z,8Z,11Z,14Z)-eicosatetraenoate + CoA + H(+). It carries out the reaction 4,8-dimethylnonanoyl-CoA + H2O = 4,8-dimethylnonanoate + CoA + H(+). The enzyme catalyses 2,6-dimethylheptanoyl-CoA + H2O = 2,6-dimethylheptanoate + CoA + H(+). The catalysed reaction is (3S)-3-hydroxy-3-methylglutaryl-CoA + H2O = 3-hydroxy-3-methylglutarate + CoA + H(+). It catalyses the reaction 3alpha,7alpha,12alpha-trihydroxy-5beta-cholestan-26-oyl-CoA + H2O = 3alpha,7alpha,12alpha-trihydroxy-5beta-cholestan-26-oate + CoA + H(+). It carries out the reaction 2-methyloctadecanoyl-CoA + H2O = 2-methyloctadecanoate + CoA + H(+). The enzyme catalyses prostaglandin F2alpha-CoA + H2O = prostaglandin F2alpha + CoA + H(+). It functions in the pathway lipid metabolism; fatty acid metabolism. With respect to regulation, inhibited by CoASH (IC(50)=10-15 uM). Also inhibited by cysteine-reactive agents. Catalyzes the hydrolysis of acyl-CoAs into free fatty acids and coenzyme A (CoASH), regulating their respective intracellular levels. Displays no strong substrate specificity with respect to the carboxylic acid moiety of Acyl-CoAs. Hydrolyzes medium length (C2 to C20) straight-chain, saturated and unsaturated acyl-CoAS but is inactive towards substrates with longer aliphatic chains. Moreover, it catalyzes the hydrolysis of CoA esters of bile acids, such as choloyl-CoA and chenodeoxycholoyl-CoA and competes with bile acid CoA:amino acid N-acyltransferase (BAAT). Is also able to hydrolyze CoA esters of dicarboxylic acids. It is involved in the metabolic regulation of peroxisome proliferation. This is Acyl-coenzyme A thioesterase 8 (Acot8) from Mus musculus (Mouse).